The chain runs to 185 residues: Shikimate kinase (185 aa).

15 to 20 (GAGKST) contributes to the ATP binding site. Serine 19 contributes to the Mg(2+) binding site. The substrate site is built by aspartate 37, arginine 61, and glycine 83. Arginine 121 contributes to the ATP binding site. Arginine 146 contacts substrate.

It belongs to the shikimate kinase family. As to quaternary structure, monomer. It depends on Mg(2+) as a cofactor.

The protein resides in the cytoplasm. The enzyme catalyses shikimate + ATP = 3-phosphoshikimate + ADP + H(+). It functions in the pathway metabolic intermediate biosynthesis; chorismate biosynthesis; chorismate from D-erythrose 4-phosphate and phosphoenolpyruvate: step 5/7. Catalyzes the specific phosphorylation of the 3-hydroxyl group of shikimic acid using ATP as a cosubstrate. This Blochmanniella floridana protein is Shikimate kinase.